A 99-amino-acid chain; its full sequence is uncharacterized protein (99 aa).

An N-terminal signal peptide occupies residues 1 to 17 (MMMNAFFPAMALMVLVG). The N-palmitoyl cysteine moiety is linked to residue Cys-18. Cys-18 is lipidated: S-diacylglycerol cysteine.

It localises to the cell membrane. This is an uncharacterized protein from Shigella boydii serotype 4 (strain Sb227).